Reading from the N-terminus, the 540-residue chain is Mitochondrial distribution and morphology protein 34 (540 aa).

An SMP-LTD domain is found at 1–208; it reads MSFKFNSGTF…LPSVIFNMSQ (208 aa). Disordered regions lie at residues 26 to 51 and 379 to 399; these read ALNP…KKPK and RSKS…SGSL. The segment covering 35–44 has biased composition (polar residues); sequence PESTSGQDGS.

The protein belongs to the MDM34 family. Component of the ER-mitochondria encounter structure (ERMES) or MDM complex, composed of MMM1, MDM10, MDM12 and MDM34.

The protein resides in the mitochondrion outer membrane. Component of the ERMES/MDM complex, which serves as a molecular tether to connect the endoplasmic reticulum (ER) and mitochondria. Components of this complex are involved in the control of mitochondrial shape and protein biogenesis, and function in nonvesicular lipid trafficking between the ER and mitochondria. MDM34 is required for the interaction of the ER-resident membrane protein MMM1 and the outer mitochondrial membrane-resident beta-barrel protein MDM10. This is Mitochondrial distribution and morphology protein 34 from Kluyveromyces lactis (strain ATCC 8585 / CBS 2359 / DSM 70799 / NBRC 1267 / NRRL Y-1140 / WM37) (Yeast).